Consider the following 273-residue polypeptide: Signal recognition particle subunit SEC65 (273 aa).

The segment at 25-71 (PSLRTPIAPKITPKVVRSQDQENPAFLPGTNNNSNSNNNSSNEKEQL) is disordered. The segment covering 55 to 65 (NNNSNSNNNSS) has biased composition (low complexity).

Fungal signal recognition particle (SRP) complex consists of a 7S RNA molecule (scR1) and at least six protein subunits: SRP72, SRP68, SRP54, SEC65, SRP21 and SRP14.

The protein localises to the cytoplasm. Functionally, signal-recognition-particle (SRP) assembly has a crucial role in targeting secretory proteins to the rough endoplasmic reticulum (ER) membrane. SRP is required for the cotranslational protein translocation for ER import and preferentially recognizes strongly hydrophobic signal sequences. It is involved in targeting the nascent chain-ribosome (RNC) complex to the ER and is proposed to participate in the arrest of nascent chain elongation during membrane targeting. SEC65 is required for SRP integrity. The protein is Signal recognition particle subunit SEC65 (SEC65) of Saccharomyces cerevisiae (strain ATCC 204508 / S288c) (Baker's yeast).